A 60-amino-acid polypeptide reads, in one-letter code: Metallothionein B (60 aa).

The interval 1–28 (MDPCECSKSGTCNCGGSCTCTNCSCTSC) is beta. A divalent metal cation-binding residues include Cys4, Cys6, Cys12, Cys14, Cys18, Cys20, Cys23, Cys25, Cys28, Cys32, Cys33, Cys35, Cys36, Cys40, Cys43, Cys47, Cys49, Cys54, Cys58, and Cys59. The segment at 29–60 (KKSCCPCCPSGCTKCASGCVCKGKTCDTSCCQ) is alpha.

The protein belongs to the metallothionein superfamily. Type 1 family.

Metallothioneins have a high content of cysteine residues that bind various heavy metals. The protein is Metallothionein B (mtb) of Trematomus bernacchii (Emerald rockcod).